The following is a 25-amino-acid chain: Ocellatin-K1 (25 aa).

I25 is subject to Isoleucine amide.

In terms of tissue distribution, expressed by the skin glands.

It is found in the secreted. Has hemolytic and antibacterial activity. The sequence is that of Ocellatin-K1 from Leptodactylus knudseni (Knudsen's thin-toed frog).